We begin with the raw amino-acid sequence, 420 residues long: Glycogen synthase kinase-3 beta (420 aa).

The span at 1-22 (MSGRPRTTSFAESCKPVQQPSA) shows a compositional bias: polar residues. A disordered region spans residues 1–53 (MSGRPRTTSFAESCKPVQQPSAFGSMKVSRDKDGSKVTTVVATPGQGPDRPQE). Ser9 bears the Phosphoserine; by PKB/AKT1, RPS6KA3 and SGK3 mark. Cys14 is lipidated: S-palmitoyl cysteine. The Protein kinase domain occupies 56–340 (YTDTKVIGNG…PLEACAHSFF (285 aa)). Residues 62–70 (IGNGSFGVV) and Lys85 contribute to the ATP site. The active-site Proton acceptor is Asp181. Tyr216 is modified (phosphotyrosine). Positions 386–401 (AAASTPTNATAASDAN) are enriched in low complexity. Residues 386 to 420 (AAASTPTNATAASDANTGDRGQTNNAASASASNST) form a disordered region. At Ser389 the chain carries Phosphoserine. Thr390 and Thr402 each carry phosphothreonine. Positions 409 to 420 (NNAASASASNST) are enriched in low complexity.

This sequence belongs to the protein kinase superfamily. CMGC Ser/Thr protein kinase family. GSK-3 subfamily. As to quaternary structure, monomer. Interacts with ARRB2, DISC1 and ZBED3. Interacts with CABYR, MMP2, MUC1, NIN and PRUNE1. Interacts with AXIN1; the interaction mediates hyperphosphorylation of CTNNB1 leading to its ubiquitination and destruction. Interacts with and phosphorylates SNAI1. Interacts with DNM1L (via a C-terminal domain). Found in a complex composed of MACF1, APC, AXIN1, CTNNB1 and GSK3B. Interacts with SGK3. Interacts with DAB2IP (via C2 domain); the interaction stimulates GSK3B kinase activation. Interacts (via C2 domain) with PPP2CA. Interacts with the CLOCK-BMAL1 heterodimer. Interacts with the BMAL1. Interacts with CTNND2. Interacts with NCYM. The complex composed, at least, of APC, CTNNB1 and GSK3B interacts with JPT1; the interaction requires the inactive form of GSK3B (phosphorylated at 'Ser-9'). Forms a complex composed of PRKAR2A or PRKAR2B, GSK3B and GSKIP through GSKIP interaction; facilitates PKA-induced phosphorylation and regulates GSK3B activity. Interacts with GSKIP. Interacts with GID8. Interacts with PIWIL2. Interacts with LMBR1L. Interacts with DDX3X. Interacts with BIRC2. Interacts with TNFRSF10B; TNFRSF10B stimulation inhibits GSK3B kinase activity. Interacts with RICTOR; the interaction results in phosphorylation of RICTOR at 'Thr-1695' by GSK3B which facilitates FBXW7-mediated ubiquitination and subsequent degradation of RICTOR. Found in a complex with SLC39A6, SLC39A10 and with GSK3B that controls NCAM1 phosphorylation. Interacts with PKP3 (via ARM repeats); the interaction may be involved in PKP3 protein degradation. Phosphorylated by AKT1 and ILK1. Upon insulin-mediated signaling, the activated PKB/AKT1 protein kinase phosphorylates and deactivates GSK3B, resulting in the dephosphorylation and activation of GYS1. Activated by phosphorylation at Tyr-216. Inactivated by phosphorylation at Ser-9. Phosphorylated in a circadian manner in the hippocampus. Post-translationally, mono-ADP-ribosylation by PARP10 negatively regulates kinase activity. In terms of processing, palmitoylated. Palmitoylation by ZDHHC4 prevents AKT1-mediated phosphorylation. As to expression, expressed in testis, thymus, prostate and ovary and weakly expressed in lung, brain and kidney. Colocalizes with EIF2AK2/PKR and TAU in the Alzheimer disease (AD) brain.

It is found in the cytoplasm. The protein resides in the nucleus. The protein localises to the cell membrane. It carries out the reaction L-seryl-[tau protein] + ATP = O-phospho-L-seryl-[tau protein] + ADP + H(+). It catalyses the reaction L-threonyl-[tau protein] + ATP = O-phospho-L-threonyl-[tau protein] + ADP + H(+). The enzyme catalyses L-seryl-[protein] + ATP = O-phospho-L-seryl-[protein] + ADP + H(+). The catalysed reaction is L-threonyl-[protein] + ATP = O-phospho-L-threonyl-[protein] + ADP + H(+). Activated by phosphorylation at Tyr-216. In response to insulin, inhibited by phosphorylation at Ser-9 by PKB/AKT1 and RPS6KA3; phosphorylation at this site causes a conformational change, preventing access of substrates to the active site. Inhibited by IL22 treatment which also triggers phosphorylation at Ser-9, promoting inactivation. Inhibited by lithium. Functionally, constitutively active protein kinase that acts as a negative regulator in the hormonal control of glucose homeostasis, Wnt signaling and regulation of transcription factors and microtubules, by phosphorylating and inactivating glycogen synthase (GYS1 or GYS2), EIF2B, CTNNB1/beta-catenin, APC, AXIN1, DPYSL2/CRMP2, JUN, NFATC1/NFATC, MAPT/TAU and MACF1. Requires primed phosphorylation of the majority of its substrates. In skeletal muscle, contributes to insulin regulation of glycogen synthesis by phosphorylating and inhibiting GYS1 activity and hence glycogen synthesis. May also mediate the development of insulin resistance by regulating activation of transcription factors. Regulates protein synthesis by controlling the activity of initiation factor 2B (EIF2BE/EIF2B5) in the same manner as glycogen synthase. In Wnt signaling, GSK3B forms a multimeric complex with APC, AXIN1 and CTNNB1/beta-catenin and phosphorylates the N-terminus of CTNNB1 leading to its degradation mediated by ubiquitin/proteasomes. Phosphorylates JUN at sites proximal to its DNA-binding domain, thereby reducing its affinity for DNA. Phosphorylates NFATC1/NFATC on conserved serine residues promoting NFATC1/NFATC nuclear export, shutting off NFATC1/NFATC gene regulation, and thereby opposing the action of calcineurin. Phosphorylates MAPT/TAU on 'Thr-548', decreasing significantly MAPT/TAU ability to bind and stabilize microtubules. MAPT/TAU is the principal component of neurofibrillary tangles in Alzheimer disease. Plays an important role in ERBB2-dependent stabilization of microtubules at the cell cortex. Phosphorylates MACF1, inhibiting its binding to microtubules which is critical for its role in bulge stem cell migration and skin wound repair. Probably regulates NF-kappa-B (NFKB1) at the transcriptional level and is required for the NF-kappa-B-mediated anti-apoptotic response to TNF-alpha (TNF/TNFA). Negatively regulates replication in pancreatic beta-cells, resulting in apoptosis, loss of beta-cells and diabetes. Through phosphorylation of the anti-apoptotic protein MCL1, may control cell apoptosis in response to growth factors deprivation. Phosphorylates MUC1 in breast cancer cells, decreasing the interaction of MUC1 with CTNNB1/beta-catenin. Is necessary for the establishment of neuronal polarity and axon outgrowth. Phosphorylates MARK2, leading to inhibition of its activity. Phosphorylates SIK1 at 'Thr-182', leading to sustainment of its activity. Phosphorylates ZC3HAV1 which enhances its antiviral activity. Phosphorylates SNAI1, leading to its ubiquitination and proteasomal degradation. Phosphorylates SFPQ at 'Thr-687' upon T-cell activation. Phosphorylates NR1D1 st 'Ser-55' and 'Ser-59' and stabilizes it by protecting it from proteasomal degradation. Regulates the circadian clock via phosphorylation of the major clock components including BMAL1, CLOCK and PER2. Phosphorylates FBXL2 at 'Thr-404' and primes it for ubiquitination by the SCF(FBXO3) complex and proteasomal degradation. Phosphorylates CLOCK AT 'Ser-427' and targets it for proteasomal degradation. Phosphorylates BMAL1 at 'Ser-17' and 'Ser-21' and primes it for ubiquitination and proteasomal degradation. Phosphorylates OGT at 'Ser-3' or 'Ser-4' which positively regulates its activity. Phosphorylates MYCN in neuroblastoma cells which may promote its degradation. Regulates the circadian rhythmicity of hippocampal long-term potentiation and BMAL1 and PER2 expression. Acts as a regulator of autophagy by mediating phosphorylation of KAT5/TIP60 under starvation conditions, activating KAT5/TIP60 acetyltransferase activity and promoting acetylation of key autophagy regulators, such as ULK1 and RUBCNL/Pacer. Negatively regulates extrinsic apoptotic signaling pathway via death domain receptors. Promotes the formation of an anti-apoptotic complex, made of DDX3X, BRIC2 and GSK3B, at death receptors, including TNFRSF10B. The anti-apoptotic function is most effective with weak apoptotic signals and can be overcome by stronger stimulation. Phosphorylates E2F1, promoting the interaction between E2F1 and USP11, stabilizing E2F1 and promoting its activity. Phosphorylates mTORC2 complex component RICTOR at 'Ser-1235' in response to endoplasmic stress, inhibiting mTORC2. Phosphorylates mTORC2 complex component RICTOR at 'Thr-1695' which facilitates FBXW7-mediated ubiquitination and subsequent degradation of RICTOR. Phosphorylates FXR1, promoting FXR1 ubiquitination by the SCF(FBXO4) complex and FXR1 degradation by the proteasome. Phosphorylates interleukin-22 receptor subunit IL22RA1, preventing its proteasomal degradation. This chain is Glycogen synthase kinase-3 beta, found in Homo sapiens (Human).